The chain runs to 77 residues: U14-theraphotoxin-Cg1a 2 (77 aa).

Residues 1-21 (MKTSVLLVILGIAAITVQCTA) form the signal peptide. The propeptide occupies 22-49 (SESVKQDSLRTFVDAVLGWNAEMASEAR). Cystine bridges form between Cys50-Cys64, Cys57-Cys69, and Cys63-Cys75. Lys77 bears the Lysine amide mark.

It belongs to the neurotoxin 10 (Hwtx-1) family. 65 (Jztx-21) subfamily. Expressed by the venom gland.

It is found in the secreted. Its function is as follows. Probable ion channel inhibitor. In Chilobrachys guangxiensis (Chinese earth tiger tarantula), this protein is U14-theraphotoxin-Cg1a 2.